A 208-amino-acid polypeptide reads, in one-letter code: Type 4 adapter protein LvgA (208 aa).

As to quaternary structure, the T4BSS is a complex nanomachine composed of several subcomplexes. This subunit is part of the Type IV Coupling Complex (T4CC), a subcomplex composed of the DotLMNYZ core and the IcmSW-LvgA adapter subunits, linked by the C-terminal tail of DotL. Interacts with DotL, IcmS and IcmW. Interacts with various effector proteins, including VpdB, SetA, PieA and SidH.

The protein localises to the cytoplasm. Functionally, component of the Dot/Icm type IVB secretion system (T4BSS), which is used to inject bacterial effector proteins into eukaryotic host cells. Part of a subcomplex which recruits effector proteins and delivers them to the core transmembrane subcomplex. Is a critical subunit for binding a subset of effector proteins. Recognizes more than one type of binding motif. May be a critical factor that confers host specificity. The protein is Type 4 adapter protein LvgA of Legionella pneumophila subsp. pneumophila (strain Philadelphia 1 / ATCC 33152 / DSM 7513).